The sequence spans 592 residues: E3 ubiquitin-protein ligase RNF180 (592 aa).

Residues 1–564 lie on the Cytoplasmic side of the membrane; it reads MKRSKELITK…DSRGWWFDMD (564 aa). Ser230 is subject to Phosphoserine. The RING-type zinc-finger motif lies at 432 to 474; it reads CAVCLDVYFNPYMCYPCRHIFCEPCLRTLAKDNPSSTPCPLCR. Residues 565-585 form a helical membrane-spanning segment; that stretch reads MVIIYIYSVNWVIGFIVFCFL. Residues 586–592 are Extracellular-facing; that stretch reads CYFFFPF.

As to quaternary structure, interacts with ZIC2.

It localises to the endoplasmic reticulum membrane. It is found in the nucleus envelope. The catalysed reaction is S-ubiquitinyl-[E2 ubiquitin-conjugating enzyme]-L-cysteine + [acceptor protein]-L-lysine = [E2 ubiquitin-conjugating enzyme]-L-cysteine + N(6)-ubiquitinyl-[acceptor protein]-L-lysine.. Its pathway is protein modification; protein ubiquitination. Functionally, E3 ubiquitin-protein ligase which promotes polyubiquitination and degradation by the proteasome pathway of ZIC2. This chain is E3 ubiquitin-protein ligase RNF180 (RNF180), found in Pongo abelii (Sumatran orangutan).